A 108-amino-acid polypeptide reads, in one-letter code: ATP synthase peripheral stalk subunit F6, mitochondrial (108 aa).

Residues 1 to 32 (MILQRLFRLSSAVQSAISVSWRRNIGITAVAF) constitute a mitochondrion transit peptide. N6-acetyllysine is present on residues lysine 41, lysine 46, and lysine 79. N6-acetyllysine; alternate occurs at positions 84 and 99. N6-succinyllysine; alternate occurs at positions 84 and 99. Residue lysine 105 is modified to N6-acetyllysine. Serine 108 is subject to Phosphoserine.

This sequence belongs to the eukaryotic ATPase subunit F6 family. As to quaternary structure, component of the ATP synthase complex composed at least of ATP5F1A/subunit alpha, ATP5F1B/subunit beta, ATP5MC1/subunit c (homooctomer), MT-ATP6/subunit a, MT-ATP8/subunit 8, ATP5ME/subunit e, ATP5MF/subunit f, ATP5MG/subunit g, ATP5MK/subunit k, ATP5MJ/subunit j, ATP5F1C/subunit gamma, ATP5F1D/subunit delta, ATP5F1E/subunit epsilon, ATP5PF/subunit F6, ATP5PB/subunit b, ATP5PD/subunit d, ATP5PO/subunit OSCP. ATP synthase complex consists of a soluble F(1) head domain (subunits alpha(3) and beta(3)) - the catalytic core - and a membrane F(0) domain - the membrane proton channel (subunits c, a, 8, e, f, g, k and j). These two domains are linked by a central stalk (subunits gamma, delta, and epsilon) rotating inside the F1 region and a stationary peripheral stalk (subunits F6, b, d, and OSCP).

The protein localises to the mitochondrion. Its subcellular location is the mitochondrion inner membrane. Functionally, subunit F6, of the mitochondrial membrane ATP synthase complex (F(1)F(0) ATP synthase or Complex V) that produces ATP from ADP in the presence of a proton gradient across the membrane which is generated by electron transport complexes of the respiratory chain. ATP synthase complex consist of a soluble F(1) head domain - the catalytic core - and a membrane F(1) domain - the membrane proton channel. These two domains are linked by a central stalk rotating inside the F(1) region and a stationary peripheral stalk. During catalysis, ATP synthesis in the catalytic domain of F(1) is coupled via a rotary mechanism of the central stalk subunits to proton translocation. In vivo, can only synthesize ATP although its ATP hydrolase activity can be activated artificially in vitro. Part of the complex F(0) domain. Part of the complex F(0) domain and the peripheric stalk, which acts as a stator to hold the catalytic alpha(3)beta(3) subcomplex and subunit a/ATP6 static relative to the rotary elements. The sequence is that of ATP synthase peripheral stalk subunit F6, mitochondrial from Bos taurus (Bovine).